A 245-amino-acid polypeptide reads, in one-letter code: 2,3-bisphosphoglycerate-dependent phosphoglycerate mutase (245 aa).

Residues Arg8–Asn15, Thr21–Gly22, Arg60, Glu87–Tyr90, Lys98, Arg114–Arg115, and Gly183–Asn184 contribute to the substrate site. His9 (tele-phosphohistidine intermediate) is an active-site residue. Residue Glu87 is the Proton donor/acceptor of the active site.

The protein belongs to the phosphoglycerate mutase family. BPG-dependent PGAM subfamily.

It catalyses the reaction (2R)-2-phosphoglycerate = (2R)-3-phosphoglycerate. It functions in the pathway carbohydrate degradation; glycolysis; pyruvate from D-glyceraldehyde 3-phosphate: step 3/5. Catalyzes the interconversion of 2-phosphoglycerate and 3-phosphoglycerate. This Bacillus cereus (strain G9842) protein is 2,3-bisphosphoglycerate-dependent phosphoglycerate mutase.